The following is a 214-amino-acid chain: Large ribosomal subunit protein uL3 (214 aa).

Belongs to the universal ribosomal protein uL3 family. In terms of assembly, part of the 50S ribosomal subunit. Forms a cluster with proteins L14 and L19.

One of the primary rRNA binding proteins, it binds directly near the 3'-end of the 23S rRNA, where it nucleates assembly of the 50S subunit. This Streptomyces coelicolor (strain ATCC BAA-471 / A3(2) / M145) protein is Large ribosomal subunit protein uL3.